Reading from the N-terminus, the 640-residue chain is Probable potassium transport system protein Kup (640 aa).

The next 12 membrane-spanning stretches (helical) occupy residues I26–L46, I69–I89, A117–I137, P155–I175, I186–I206, F224–T244, W265–L285, L297–I317, I355–F375, A384–V404, A415–V435, and I437–T457.

This sequence belongs to the HAK/KUP transporter (TC 2.A.72) family.

It is found in the cell inner membrane. The catalysed reaction is K(+)(in) + H(+)(in) = K(+)(out) + H(+)(out). Transport of potassium into the cell. Likely operates as a K(+):H(+) symporter. The sequence is that of Probable potassium transport system protein Kup from Aromatoleum aromaticum (strain DSM 19018 / LMG 30748 / EbN1) (Azoarcus sp. (strain EbN1)).